A 216-amino-acid polypeptide reads, in one-letter code: MKLTWIKCMSKTERISDIDEPRLFEENGVEAHIAAFVMPLLKPLGFRLVRVKLLGLNGLTLQIMVERPDGSMTVEDCETVSRTVSPLLDVQNVIERKYHLEISSPGIDRPLVRKSDFFHWQGHIAKIETKIILEGRRKFRGTLTNITQDGFTLNTDKAAYGESMYISIPFDDIIDAHLVLTDELIRDALKKNKDLSQQFISEDNQKLSKQERNYKN.

This sequence belongs to the RimP family.

Its subcellular location is the cytoplasm. Its function is as follows. Required for maturation of 30S ribosomal subunits. This Bartonella henselae (strain ATCC 49882 / DSM 28221 / CCUG 30454 / Houston 1) (Rochalimaea henselae) protein is Ribosome maturation factor RimP.